The chain runs to 192 residues: Fe/S biogenesis protein NfuA (192 aa).

Positions 149 and 152 each coordinate [4Fe-4S] cluster.

This sequence belongs to the NfuA family. As to quaternary structure, homodimer. It depends on [4Fe-4S] cluster as a cofactor.

In terms of biological role, involved in iron-sulfur cluster biogenesis. Binds a 4Fe-4S cluster, can transfer this cluster to apoproteins, and thereby intervenes in the maturation of Fe/S proteins. Could also act as a scaffold/chaperone for damaged Fe/S proteins. The protein is Fe/S biogenesis protein NfuA of Shewanella sediminis (strain HAW-EB3).